The following is a 145-amino-acid chain: MLVPKRVKHRREFRGKMRGEAKGGKTIAFGEYGLEAVESHWITNRQIEAARIAMTRFMKRGGRVWIRIFPQKSYTAKGVGVRMGSGKGAPAGWVAVVKRGKIMFEIGGVSEDVAREALRLASNKLPIKTKFVKKSSEVGGESNEG.

It belongs to the universal ribosomal protein uL16 family. As to quaternary structure, part of the 50S ribosomal subunit.

In terms of biological role, binds 23S rRNA and is also seen to make contacts with the A and possibly P site tRNAs. The protein is Large ribosomal subunit protein uL16 of Lactobacillus gasseri (strain ATCC 33323 / DSM 20243 / BCRC 14619 / CIP 102991 / JCM 1131 / KCTC 3163 / NCIMB 11718 / NCTC 13722 / AM63).